A 527-amino-acid chain; its full sequence is Light-independent protochlorophyllide reductase subunit B (527 aa).

Asp-36 is a binding site for [4Fe-4S] cluster. Asp-292 serves as the catalytic Proton donor. 428 to 429 is a substrate binding site; sequence GL.

This sequence belongs to the ChlB/BchB/BchZ family. In terms of assembly, protochlorophyllide reductase is composed of three subunits; BchL, BchN and BchB. Forms a heterotetramer of two BchB and two BchN subunits. [4Fe-4S] cluster is required as a cofactor.

It catalyses the reaction chlorophyllide a + oxidized 2[4Fe-4S]-[ferredoxin] + 2 ADP + 2 phosphate = protochlorophyllide a + reduced 2[4Fe-4S]-[ferredoxin] + 2 ATP + 2 H2O. The protein operates within porphyrin-containing compound metabolism; bacteriochlorophyll biosynthesis (light-independent). Component of the dark-operative protochlorophyllide reductase (DPOR) that uses Mg-ATP and reduced ferredoxin to reduce ring D of protochlorophyllide (Pchlide) to form chlorophyllide a (Chlide). This reaction is light-independent. The NB-protein (BchN-BchB) is the catalytic component of the complex. This is Light-independent protochlorophyllide reductase subunit B from Chlorobium phaeovibrioides (strain DSM 265 / 1930) (Prosthecochloris vibrioformis (strain DSM 265)).